The following is a 411-amino-acid chain: Pre-mRNA-splicing factor dre4 (411 aa).

The 34-residue stretch at Gln3–Phe36 folds into the WW 1 domain. The segment at Asn65–Lys84 is disordered. Basic and acidic residues predominate over residues Ala66–Pro83. The 34-residue stretch at Ile89–Glu122 folds into the WW 2 domain. The tract at residues Ile138 to Phe209 is disordered. Polar residues predominate over residues Lys140–Gly151. Positions Lys152–Thr166 are enriched in basic and acidic residues. Residues Glu167 to Glu179 are compositionally biased toward acidic residues. Positions Thr239 to Ser293 constitute an FF domain.

As to quaternary structure, component of the spliceosomal complex. Interacts with prp19.

It is found in the nucleus. In terms of biological role, component of the spliceosome involved in mRNA processing. The chain is Pre-mRNA-splicing factor dre4 (dre4) from Schizosaccharomyces pombe (strain 972 / ATCC 24843) (Fission yeast).